The following is a 244-amino-acid chain: MTSQEPEVLFPASAPQVTTDLSNNVVLTTVNDLYNWAKMSSLWPLLYGTACCFIEFAAMLGSRFDFDRFGLLPRSSPRTADLIITAGTVTMKMAPALVKLYQQMAEPKYVIAMGACTISGGMFSSDSYTAVRGVDKLIPVDVYIPGCPPRPEAIMDAIVKLRKKIAAEDMRERGRLQQTHRYYTVKHNLKPVPEIITGKYLESETRQAPPPELAAAIGLPVPPALQTADFKQAEQQLKALRGGM.

[4Fe-4S] cluster-binding residues include C51, C52, C116, and C147.

The protein belongs to the complex I 20 kDa subunit family. In terms of assembly, NDH-1 can be composed of about 15 different subunits; different subcomplexes with different compositions have been identified which probably have different functions. [4Fe-4S] cluster is required as a cofactor.

It localises to the cellular thylakoid membrane. It carries out the reaction a plastoquinone + NADH + (n+1) H(+)(in) = a plastoquinol + NAD(+) + n H(+)(out). The enzyme catalyses a plastoquinone + NADPH + (n+1) H(+)(in) = a plastoquinol + NADP(+) + n H(+)(out). Its function is as follows. NDH-1 shuttles electrons from an unknown electron donor, via FMN and iron-sulfur (Fe-S) centers, to quinones in the respiratory and/or the photosynthetic chain. The immediate electron acceptor for the enzyme in this species is believed to be plastoquinone. Couples the redox reaction to proton translocation, and thus conserves the redox energy in a proton gradient. Cyanobacterial NDH-1 also plays a role in inorganic carbon-concentration. The polypeptide is NAD(P)H-quinone oxidoreductase subunit K (Synechococcus sp. (strain JA-3-3Ab) (Cyanobacteria bacterium Yellowstone A-Prime)).